Here is a 300-residue protein sequence, read N- to C-terminus: MQTQDQALEVAKVLTEALPYIQRFTGKTIVVKFGGNAMTDTELQNSFARDIVLMKLVGMNPIVVHGGGPQIGDLLKKLNIESSFVDGMRVTDSATMDVVEMVLGGTVNKQIVSLINRNGGQAIGVTGKDGNLIHAKKLTVNRKSPEVQASEIIDIGHVGEVKTINRSVIDVLVNSDFIPVIAPIGVGDDGASYNINADLVAGKVAEVLQAEKLMLLTNVAGLQDKSGQVLTGLTTGRVDELIADGTIYGGMLPKISCALDAVKCGVKSAHIIDGRVPHAVLLEIFTDSGVGTLITNEYSA.

Residues 67 to 68, Arg89, and Asn194 contribute to the substrate site; that span reads GG.

The protein belongs to the acetylglutamate kinase family. ArgB subfamily.

Its subcellular location is the cytoplasm. The enzyme catalyses N-acetyl-L-glutamate + ATP = N-acetyl-L-glutamyl 5-phosphate + ADP. The protein operates within amino-acid biosynthesis; L-arginine biosynthesis; N(2)-acetyl-L-ornithine from L-glutamate: step 2/4. Its function is as follows. Catalyzes the ATP-dependent phosphorylation of N-acetyl-L-glutamate. This Saccharophagus degradans (strain 2-40 / ATCC 43961 / DSM 17024) protein is Acetylglutamate kinase.